Consider the following 668-residue polypeptide: DNA ligase (668 aa).

Residues 31-35 (DAEYD), 80-81 (SL), and Glu112 contribute to the NAD(+) site. The active-site N6-AMP-lysine intermediate is Lys114. The NAD(+) site is built by Arg135, Glu172, Lys289, and Lys313. Cys407, Cys410, Cys425, and Cys431 together coordinate Zn(2+). Positions 591 to 668 (SVPQPLAGKV…NEEQLIELLN (78 aa)) constitute a BRCT domain.

The protein belongs to the NAD-dependent DNA ligase family. LigA subfamily. Mg(2+) is required as a cofactor. It depends on Mn(2+) as a cofactor.

It catalyses the reaction NAD(+) + (deoxyribonucleotide)n-3'-hydroxyl + 5'-phospho-(deoxyribonucleotide)m = (deoxyribonucleotide)n+m + AMP + beta-nicotinamide D-nucleotide.. Its function is as follows. DNA ligase that catalyzes the formation of phosphodiester linkages between 5'-phosphoryl and 3'-hydroxyl groups in double-stranded DNA using NAD as a coenzyme and as the energy source for the reaction. It is essential for DNA replication and repair of damaged DNA. The protein is DNA ligase of Aliivibrio fischeri (strain MJ11) (Vibrio fischeri).